The sequence spans 217 residues: Adenylate kinase (217 aa).

10 to 15 contacts ATP; that stretch reads GAGKGT. Residues 30 to 59 are NMP; sequence STGDLFRANISQQTELGKLAKSYMNAGNLV. Residues Thr31, Arg36, 57–59, 85–88, and Gln92 each bind AMP; these read NLV and GFPR. The segment at 126–164 is LID; that stretch reads GRRVCRNEPKHVFHVTYTPPKKEGVCDVCGGELYQRDDD. Residues Arg127 and 137–138 contribute to the ATP site; that span reads VF. Arg161 and Arg172 together coordinate AMP. An ATP-binding site is contributed by Gly200.

The protein belongs to the adenylate kinase family. As to quaternary structure, monomer.

It is found in the cytoplasm. The enzyme catalyses AMP + ATP = 2 ADP. It participates in purine metabolism; AMP biosynthesis via salvage pathway; AMP from ADP: step 1/1. Catalyzes the reversible transfer of the terminal phosphate group between ATP and AMP. Plays an important role in cellular energy homeostasis and in adenine nucleotide metabolism. This is Adenylate kinase from Streptomyces coelicolor (strain ATCC BAA-471 / A3(2) / M145).